Consider the following 608-residue polypeptide: UvrABC system protein C (608 aa).

The 79-residue stretch at 22 to 100 folds into the GIY-YIG domain; it reads EKPGIYQYLN…IKKYKPRYNV (79 aa). Residues 214 to 249 enclose the UVR domain; sequence QEISRLLYQRMQDLAAEMKFEEAQKVKEKYALIENY.

The protein belongs to the UvrC family. In terms of assembly, interacts with UvrB in an incision complex.

The protein localises to the cytoplasm. Its function is as follows. The UvrABC repair system catalyzes the recognition and processing of DNA lesions. UvrC both incises the 5' and 3' sides of the lesion. The N-terminal half is responsible for the 3' incision and the C-terminal half is responsible for the 5' incision. This Bacteroides fragilis (strain ATCC 25285 / DSM 2151 / CCUG 4856 / JCM 11019 / LMG 10263 / NCTC 9343 / Onslow / VPI 2553 / EN-2) protein is UvrABC system protein C.